Consider the following 176-residue polypeptide: Ribosome maturation factor RimM (176 aa).

In terms of domain architecture, PRC barrel spans 101 to 170 (EGEYFESDLI…RITVELPEGL (70 aa)).

Belongs to the RimM family. As to quaternary structure, binds ribosomal protein uS19.

Its subcellular location is the cytoplasm. Its function is as follows. An accessory protein needed during the final step in the assembly of 30S ribosomal subunit, possibly for assembly of the head region. Essential for efficient processing of 16S rRNA. May be needed both before and after RbfA during the maturation of 16S rRNA. It has affinity for free ribosomal 30S subunits but not for 70S ribosomes. The chain is Ribosome maturation factor RimM from Solibacter usitatus (strain Ellin6076).